The primary structure comprises 110 residues: Small ribosomal subunit protein uS10 (110 aa).

It belongs to the universal ribosomal protein uS10 family. In terms of assembly, part of the 30S ribosomal subunit.

Involved in the binding of tRNA to the ribosomes. The sequence is that of Small ribosomal subunit protein uS10 from Ehrlichia ruminantium (strain Gardel).